The following is a 240-amino-acid chain: Pyridoxine 5'-phosphate synthase (240 aa).

Position 7 (asparagine 7) interacts with 3-amino-2-oxopropyl phosphate. Residue aspartate 9–histidine 10 participates in 1-deoxy-D-xylulose 5-phosphate binding. Arginine 18 contributes to the 3-amino-2-oxopropyl phosphate binding site. Histidine 43 functions as the Proton acceptor in the catalytic mechanism. 1-deoxy-D-xylulose 5-phosphate contacts are provided by arginine 45 and histidine 50. The Proton acceptor role is filled by glutamate 70. Residue threonine 100 coordinates 1-deoxy-D-xylulose 5-phosphate. Histidine 191 (proton donor) is an active-site residue. 3-amino-2-oxopropyl phosphate-binding positions include glycine 192 and glycine 213 to histidine 214.

This sequence belongs to the PNP synthase family. Homooctamer; tetramer of dimers.

Its subcellular location is the cytoplasm. It catalyses the reaction 3-amino-2-oxopropyl phosphate + 1-deoxy-D-xylulose 5-phosphate = pyridoxine 5'-phosphate + phosphate + 2 H2O + H(+). It participates in cofactor biosynthesis; pyridoxine 5'-phosphate biosynthesis; pyridoxine 5'-phosphate from D-erythrose 4-phosphate: step 5/5. Its function is as follows. Catalyzes the complicated ring closure reaction between the two acyclic compounds 1-deoxy-D-xylulose-5-phosphate (DXP) and 3-amino-2-oxopropyl phosphate (1-amino-acetone-3-phosphate or AAP) to form pyridoxine 5'-phosphate (PNP) and inorganic phosphate. This chain is Pyridoxine 5'-phosphate synthase, found in Acaryochloris marina (strain MBIC 11017).